A 607-amino-acid polypeptide reads, in one-letter code: Elongation factor 4 (607 aa).

A tr-type G domain is found at Ser-11–Thr-193. Residues Asp-23–Thr-28 and Asn-140–Asp-143 each bind GTP.

It belongs to the TRAFAC class translation factor GTPase superfamily. Classic translation factor GTPase family. LepA subfamily.

The protein localises to the cell membrane. The enzyme catalyses GTP + H2O = GDP + phosphate + H(+). Required for accurate and efficient protein synthesis under certain stress conditions. May act as a fidelity factor of the translation reaction, by catalyzing a one-codon backward translocation of tRNAs on improperly translocated ribosomes. Back-translocation proceeds from a post-translocation (POST) complex to a pre-translocation (PRE) complex, thus giving elongation factor G a second chance to translocate the tRNAs correctly. Binds to ribosomes in a GTP-dependent manner. In Bacillus anthracis (strain CDC 684 / NRRL 3495), this protein is Elongation factor 4.